The following is an 81-amino-acid chain: Large ribosomal subunit protein bL31B (81 aa).

The protein belongs to the bacterial ribosomal protein bL31 family. Type B subfamily. Part of the 50S ribosomal subunit.

In Lactococcus lactis subsp. cremoris (strain MG1363), this protein is Large ribosomal subunit protein bL31B.